The primary structure comprises 282 residues: 4-hydroxy-3-methylbut-2-enyl diphosphate reductase (282 aa).

Cys14 provides a ligand contact to [4Fe-4S] cluster. 2 residues coordinate (2E)-4-hydroxy-3-methylbut-2-enyl diphosphate: His43 and His78. The dimethylallyl diphosphate site is built by His43 and His78. Positions 43 and 78 each coordinate isopentenyl diphosphate. Cys100 contributes to the [4Fe-4S] cluster binding site. His128 is a binding site for (2E)-4-hydroxy-3-methylbut-2-enyl diphosphate. His128 is a binding site for dimethylallyl diphosphate. His128 is an isopentenyl diphosphate binding site. Catalysis depends on Glu130, which acts as the Proton donor. Residue Thr164 coordinates (2E)-4-hydroxy-3-methylbut-2-enyl diphosphate. Position 192 (Cys192) interacts with [4Fe-4S] cluster. The (2E)-4-hydroxy-3-methylbut-2-enyl diphosphate site is built by Ser220, Ser221, Asn222, and Ser266. Positions 220, 221, 222, and 266 each coordinate dimethylallyl diphosphate. Ser220, Ser221, Asn222, and Ser266 together coordinate isopentenyl diphosphate.

The protein belongs to the IspH family. Requires [4Fe-4S] cluster as cofactor.

The enzyme catalyses isopentenyl diphosphate + 2 oxidized [2Fe-2S]-[ferredoxin] + H2O = (2E)-4-hydroxy-3-methylbut-2-enyl diphosphate + 2 reduced [2Fe-2S]-[ferredoxin] + 2 H(+). It catalyses the reaction dimethylallyl diphosphate + 2 oxidized [2Fe-2S]-[ferredoxin] + H2O = (2E)-4-hydroxy-3-methylbut-2-enyl diphosphate + 2 reduced [2Fe-2S]-[ferredoxin] + 2 H(+). It participates in isoprenoid biosynthesis; dimethylallyl diphosphate biosynthesis; dimethylallyl diphosphate from (2E)-4-hydroxy-3-methylbutenyl diphosphate: step 1/1. The protein operates within isoprenoid biosynthesis; isopentenyl diphosphate biosynthesis via DXP pathway; isopentenyl diphosphate from 1-deoxy-D-xylulose 5-phosphate: step 6/6. In terms of biological role, catalyzes the conversion of 1-hydroxy-2-methyl-2-(E)-butenyl 4-diphosphate (HMBPP) into a mixture of isopentenyl diphosphate (IPP) and dimethylallyl diphosphate (DMAPP). Acts in the terminal step of the DOXP/MEP pathway for isoprenoid precursor biosynthesis. The polypeptide is 4-hydroxy-3-methylbut-2-enyl diphosphate reductase (Clostridium perfringens (strain SM101 / Type A)).